Here is a 396-residue protein sequence, read N- to C-terminus: Elongation factor Tu (396 aa).

In terms of domain architecture, tr-type G spans 10–205; the sequence is KPHVNIGTIG…AVDESIPDPV (196 aa). Positions 19 to 26 are G1; that stretch reads GHVDHGKT. 19-26 provides a ligand contact to GTP; the sequence is GHVDHGKT. Thr26 serves as a coordination point for Mg(2+). Residues 62–66 are G2; it reads GITIN. The tract at residues 83 to 86 is G3; it reads DAPG. GTP contacts are provided by residues 83 to 87 and 138 to 141; these read DAPGH and NKAD. Residues 138 to 141 are G4; the sequence is NKAD. The G5 stretch occupies residues 175-177; the sequence is SAL.

The protein belongs to the TRAFAC class translation factor GTPase superfamily. Classic translation factor GTPase family. EF-Tu/EF-1A subfamily. As to quaternary structure, monomer.

The protein localises to the cytoplasm. It carries out the reaction GTP + H2O = GDP + phosphate + H(+). Functionally, GTP hydrolase that promotes the GTP-dependent binding of aminoacyl-tRNA to the A-site of ribosomes during protein biosynthesis. This chain is Elongation factor Tu, found in Rhodococcus jostii (strain RHA1).